The primary structure comprises 415 residues: Alpha-N-acetylgalactosaminidase (415 aa).

The N-terminal stretch at 1 to 17 (MLQKTVLLLALVAQVLM) is a signal peptide. 3 disulfide bridges follow: C38-C80, C42-C49, and C127-C158. Residues 78–79 (DD) and K154 each bind substrate. Residue D156 is the Nucleophile of the active site. N-linked (GlcNAc...) asparagine glycosylation is present at N177. Residues C187 and C209 are joined by a disulfide bond. S188 is a substrate binding site. A glycan (N-linked (GlcNAc...) asparagine) is linked at N201. Substrate contacts are provided by R213 and D217. The active-site Proton donor is D217. S322 bears the Phosphoserine mark. N330 is a glycosylation site (N-linked (GlcNAc...) asparagine). The residue at position 332 (S332) is a Phosphoserine. N385 carries N-linked (GlcNAc...) asparagine glycosylation.

The protein belongs to the glycosyl hydrolase 27 family. As to quaternary structure, homodimer.

The protein localises to the lysosome. The catalysed reaction is Cleavage of non-reducing alpha-(1-&gt;3)-N-acetylgalactosamine residues from human blood group A and AB mucin glycoproteins, Forssman hapten and blood group A lacto series glycolipids.. It carries out the reaction a neolactoside IV(3)-alpha-GalNAc,IV(2)-alpha-Fuc-nLc4Cer(d18:1(4E)) + H2O = a neolactoside IV(2)-alpha-Fuc-nLc4Cer(d18:1(4E)) + N-acetyl-alpha-D-galactosamine. It catalyses the reaction a neolactoside IV(3)-alpha-GalNAc,IV(2)-alpha-Fuc-nLc4Cer(d18:0) + H2O = a neolactoside IV(2)-alpha-Fuc-nLc4Cer(d18:0) + N-acetyl-alpha-D-galactosamine. The enzyme catalyses a globoside IV3GalNAc-Gb4Cer + H2O = N-acetyl-alpha-D-galactosamine + a globoside Gb4Cer. Functionally, removes terminal alpha-N-acetylgalactosamine residues from glycolipids and glycopeptides. Required for the breakdown of glycolipids. The chain is Alpha-N-acetylgalactosaminidase (Naga) from Rattus norvegicus (Rat).